The chain runs to 131 residues: Single-stranded DNA-binding protein 2 (131 aa).

One can recognise an SSB domain in the interval 1–103 (MYNKVIMIGR…VLASSFQLLE (103 aa)). The Important for interaction with partner proteins signature appears at 126 to 131 (EEELPF).

In terms of assembly, homotetramer.

Plays an important role in DNA replication, recombination and repair. Binds to ssDNA and to an array of partner proteins to recruit them to their sites of action during DNA metabolism. This is Single-stranded DNA-binding protein 2 (ssb2) from Streptococcus agalactiae serotype V (strain ATCC BAA-611 / 2603 V/R).